The chain runs to 582 residues: DNA mismatch repair protein MutL (582 aa).

This sequence belongs to the DNA mismatch repair MutL/HexB family.

This protein is involved in the repair of mismatches in DNA. It is required for dam-dependent methyl-directed DNA mismatch repair. May act as a 'molecular matchmaker', a protein that promotes the formation of a stable complex between two or more DNA-binding proteins in an ATP-dependent manner without itself being part of a final effector complex. This is DNA mismatch repair protein MutL from Acidiphilium cryptum (strain JF-5).